The following is a 468-amino-acid chain: 3-isopropylmalate dehydratase large subunit (468 aa).

[4Fe-4S] cluster contacts are provided by cysteine 347, cysteine 408, and cysteine 411.

Belongs to the aconitase/IPM isomerase family. LeuC type 1 subfamily. Heterodimer of LeuC and LeuD. [4Fe-4S] cluster serves as cofactor.

It carries out the reaction (2R,3S)-3-isopropylmalate = (2S)-2-isopropylmalate. It participates in amino-acid biosynthesis; L-leucine biosynthesis; L-leucine from 3-methyl-2-oxobutanoate: step 2/4. In terms of biological role, catalyzes the isomerization between 2-isopropylmalate and 3-isopropylmalate, via the formation of 2-isopropylmaleate. In Janthinobacterium sp. (strain Marseille) (Minibacterium massiliensis), this protein is 3-isopropylmalate dehydratase large subunit.